We begin with the raw amino-acid sequence, 795 residues long: Lon protease (795 aa).

One can recognise a Lon N-terminal domain in the interval 11 to 203 (GRVIPVSDIV…KFIDYLLKQK (193 aa)). An ATP-binding site is contributed by 356-363 (GPPGVGKT). The Lon proteolytic domain occupies 593–771 (DNVPGVVTGL…EDVLRETLGI (179 aa)). Catalysis depends on residues serine 677 and lysine 720.

It belongs to the peptidase S16 family. In terms of assembly, homohexamer. Organized in a ring with a central cavity.

It localises to the cytoplasm. It carries out the reaction Hydrolysis of proteins in presence of ATP.. Functionally, ATP-dependent serine protease that mediates the selective degradation of mutant and abnormal proteins as well as certain short-lived regulatory proteins. Required for cellular homeostasis and for survival from DNA damage and developmental changes induced by stress. Degrades polypeptides processively to yield small peptide fragments that are 5 to 10 amino acids long. Binds to DNA in a double-stranded, site-specific manner. This is Lon protease from Clostridium beijerinckii (strain ATCC 51743 / NCIMB 8052) (Clostridium acetobutylicum).